A 139-amino-acid chain; its full sequence is Large ribosomal subunit protein uL16 (139 aa).

Residues 1 to 16 (MLIPKRTKYRKQHRPD) are compositionally biased toward basic residues. Positions 1–23 (MLIPKRTKYRKQHRPDRHGMSKG) are disordered.

This sequence belongs to the universal ribosomal protein uL16 family. As to quaternary structure, part of the 50S ribosomal subunit.

In terms of biological role, binds 23S rRNA and is also seen to make contacts with the A and possibly P site tRNAs. The chain is Large ribosomal subunit protein uL16 from Bifidobacterium animalis subsp. lactis (strain AD011).